A 213-amino-acid polypeptide reads, in one-letter code: Holliday junction branch migration complex subunit RuvA (213 aa).

Residues 1–63 (MIGMLTGRVA…EDAFKLYGFL (63 aa)) form a domain I region. The tract at residues 64–142 (DDIDRAWFVH…PTGRSFSIGL (79 aa)) is domain II. The segment at 143 to 160 (PVHSDDGTTGGAPVAPAG) is flexible linker. Residues 161-213 (GDSLAREDAVSALVNLGYNESQARQAVAKILRDADSEAPLGDVIRLSLKELAA) are domain III.

This sequence belongs to the RuvA family. In terms of assembly, homotetramer. Forms an RuvA(8)-RuvB(12)-Holliday junction (HJ) complex. HJ DNA is sandwiched between 2 RuvA tetramers; dsDNA enters through RuvA and exits via RuvB. An RuvB hexamer assembles on each DNA strand where it exits the tetramer. Each RuvB hexamer is contacted by two RuvA subunits (via domain III) on 2 adjacent RuvB subunits; this complex drives branch migration. In the full resolvosome a probable DNA-RuvA(4)-RuvB(12)-RuvC(2) complex forms which resolves the HJ.

The protein localises to the cytoplasm. The RuvA-RuvB-RuvC complex processes Holliday junction (HJ) DNA during genetic recombination and DNA repair, while the RuvA-RuvB complex plays an important role in the rescue of blocked DNA replication forks via replication fork reversal (RFR). RuvA specifically binds to HJ cruciform DNA, conferring on it an open structure. The RuvB hexamer acts as an ATP-dependent pump, pulling dsDNA into and through the RuvAB complex. HJ branch migration allows RuvC to scan DNA until it finds its consensus sequence, where it cleaves and resolves the cruciform DNA. The polypeptide is Holliday junction branch migration complex subunit RuvA (Maricaulis maris (strain MCS10) (Caulobacter maris)).